Consider the following 272-residue polypeptide: Phosphate import ATP-binding protein PstB 2 (272 aa).

In terms of domain architecture, ABC transporter spans 26-267 (IEINNLCLNY…PIHKQTEDYI (242 aa)). 58–65 (GPSGCGKS) is an ATP binding site.

Belongs to the ABC transporter superfamily. Phosphate importer (TC 3.A.1.7) family. As to quaternary structure, the complex is composed of two ATP-binding proteins (PstB), two transmembrane proteins (PstC and PstA) and a solute-binding protein (PstS).

The protein localises to the cell inner membrane. It carries out the reaction phosphate(out) + ATP + H2O = ADP + 2 phosphate(in) + H(+). Its function is as follows. Part of the ABC transporter complex PstSACB involved in phosphate import. Responsible for energy coupling to the transport system. The polypeptide is Phosphate import ATP-binding protein PstB 2 (Aliivibrio fischeri (strain ATCC 700601 / ES114) (Vibrio fischeri)).